A 527-amino-acid polypeptide reads, in one-letter code: MAGATSATAAAGAFAAAKARGPAAACPWLVAAGGRRRSGVVRCDAGGDAQAASKAASITALEQFKISADRYMKEKSSIAVIGLSVHTAPVEMREKLAVAEELWPRAISELTSLNHIEEAAVLSTCNRMEIYVVALSWNRGIREVVDWMSKKSGIPASELREHLFMLRDSDATRHLFEVSAGLDSLVLGEGQILAQVKQVVRNGQNSGGLGKNIDRMFKDAITAGKRVRCETNISAGAVSVSSAAVELAMMKLPKSECLSARMLLIGAGKMGKLVVKHLIAKGCKKVVVVNRSVERVDAIREEMKDIEIVYRPLTEMYEAAADADVVFTSTASESLLFTKEHAEVLPPISLAMGGVRLFVDISVPRNVGACLSEVEHARVYNVDDLKEVVEANKEDRVRKAMEAQTIITQELKRFEAWRDSLETVPTIKKLRSYADRIRASELEKCLQKIGEDNLNKKMRRSIEELSTGIVNKLLHGPLQHLRCDGSDSRTLDETLENMHALNRMFSLDTEKAVLEQKIKAKVEKTQS.

Residues 1–43 (MAGATSATAAAGAFAAAKARGPAAACPWLVAAGGRRRSGVVRC) constitute a chloroplast transit peptide. Substrate contacts are provided by residues 124 to 127 (TCNR), S184, 189 to 191 (EGQ), and Q195. C125 serves as the catalytic Nucleophile. 266–271 (GAGKMG) contacts NADP(+).

The protein belongs to the glutamyl-tRNA reductase family. As to quaternary structure, homodimer.

The protein resides in the plastid. The protein localises to the chloroplast. It carries out the reaction (S)-4-amino-5-oxopentanoate + tRNA(Glu) + NADP(+) = L-glutamyl-tRNA(Glu) + NADPH + H(+). Its pathway is porphyrin-containing compound metabolism; protoporphyrin-IX biosynthesis; 5-aminolevulinate from L-glutamyl-tRNA(Glu): step 1/2. Functionally, catalyzes the NADPH-dependent reduction of glutamyl-tRNA(Glu) to glutamate 1-semialdehyde (GSA). The chain is Glutamyl-tRNA reductase 1, chloroplastic (HEMA1) from Hordeum vulgare (Barley).